The following is a 352-amino-acid chain: Holliday junction branch migration complex subunit RuvB (352 aa).

The large ATPase domain (RuvB-L) stretch occupies residues 4-185 (PDRLISAVSG…FGIVQRLEFY (182 aa)). ATP contacts are provided by residues Ile24, Arg25, Gly66, Lys69, Thr70, Thr71, 132–134 (EDF), Arg175, Tyr185, and Arg222. Thr70 provides a ligand contact to Mg(2+). A small ATPAse domain (RuvB-S) region spans residues 186 to 256 (NVEDLATIVS…IADKALNLLD (71 aa)). The head domain (RuvB-H) stretch occupies residues 259–352 (ERGFDHLDRR…SDLFTSEDGN (94 aa)). Residues Arg295, Arg314, and Arg319 each coordinate DNA.

It belongs to the RuvB family. Homohexamer. Forms an RuvA(8)-RuvB(12)-Holliday junction (HJ) complex. HJ DNA is sandwiched between 2 RuvA tetramers; dsDNA enters through RuvA and exits via RuvB. An RuvB hexamer assembles on each DNA strand where it exits the tetramer. Each RuvB hexamer is contacted by two RuvA subunits (via domain III) on 2 adjacent RuvB subunits; this complex drives branch migration. In the full resolvosome a probable DNA-RuvA(4)-RuvB(12)-RuvC(2) complex forms which resolves the HJ.

The protein resides in the cytoplasm. The enzyme catalyses ATP + H2O = ADP + phosphate + H(+). Functionally, the RuvA-RuvB-RuvC complex processes Holliday junction (HJ) DNA during genetic recombination and DNA repair, while the RuvA-RuvB complex plays an important role in the rescue of blocked DNA replication forks via replication fork reversal (RFR). RuvA specifically binds to HJ cruciform DNA, conferring on it an open structure. The RuvB hexamer acts as an ATP-dependent pump, pulling dsDNA into and through the RuvAB complex. RuvB forms 2 homohexamers on either side of HJ DNA bound by 1 or 2 RuvA tetramers; 4 subunits per hexamer contact DNA at a time. Coordinated motions by a converter formed by DNA-disengaged RuvB subunits stimulates ATP hydrolysis and nucleotide exchange. Immobilization of the converter enables RuvB to convert the ATP-contained energy into a lever motion, pulling 2 nucleotides of DNA out of the RuvA tetramer per ATP hydrolyzed, thus driving DNA branch migration. The RuvB motors rotate together with the DNA substrate, which together with the progressing nucleotide cycle form the mechanistic basis for DNA recombination by continuous HJ branch migration. Branch migration allows RuvC to scan DNA until it finds its consensus sequence, where it cleaves and resolves cruciform DNA. This chain is Holliday junction branch migration complex subunit RuvB, found in Pseudomonas paraeruginosa (strain DSM 24068 / PA7) (Pseudomonas aeruginosa (strain PA7)).